Here is a 215-residue protein sequence, read N- to C-terminus: Ribosomal RNA small subunit methyltransferase G (215 aa).

S-adenosyl-L-methionine contacts are provided by residues Gly73, Leu78, 125–126 (AE), and Arg140.

It belongs to the methyltransferase superfamily. RNA methyltransferase RsmG family.

The protein localises to the cytoplasm. In terms of biological role, specifically methylates the N7 position of guanine in position 518 of 16S rRNA. The sequence is that of Ribosomal RNA small subunit methyltransferase G from Renibacterium salmoninarum (strain ATCC 33209 / DSM 20767 / JCM 11484 / NBRC 15589 / NCIMB 2235).